Consider the following 354-residue polypeptide: uncharacterized protein (354 aa).

Residues 1-21 (MFQKKTYAVFLILLLMMFTAA) form the signal peptide. C22 carries the N-palmitoyl cysteine lipid modification. The S-diacylglycerol cysteine moiety is linked to residue C22.

The protein resides in the cell membrane. It is found in the membrane raft. This is an uncharacterized protein from Bacillus subtilis (strain 168).